A 509-amino-acid polypeptide reads, in one-letter code: Cytochrome P450 monooxygenase ARMGADRAFT_974139 (509 aa).

A helical transmembrane segment spans residues Ala-4–Gly-24. Asn-96 and Asn-279 each carry an N-linked (GlcNAc...) asparagine glycan. Cys-439 contacts heme.

It belongs to the cytochrome P450 family. The cofactor is heme.

It is found in the membrane. It participates in secondary metabolite biosynthesis. Its function is as follows. Cytochrome P450 monooxygenase, part of the gene cluster that mediates the biosynthesis of melleolides, a range of antifungal and phytotoxic polyketide derivatives composed of an orsellinic acid (OA) moiety esterified to various sesquiterpene alcohols. The first step in melleolides biosynthesis is performed by the delta(6)-protoilludene synthase PRO1 which catalyzes the cyclization of farnesyl diphosphate to protoilludene. The orsellinic acid synthase armB produces OA by condensing acetyl-CoA with 3 malonyl-CoA units in a three-round chain elongation reaction folowed by a C2-C7 ring closure. ArmB further catalyzes the trans-esterification of OA to the various sesquiterpene alcohols resulting from the hydroxylation of protoilludene. The melleolides cluster also includes 5 cytochrome P450 monooxygenases, 4 NAD(+)-dependent oxidoreductases, one flavin-dependent oxidoreductase, and one O-methyltransferase. The cytochrome P450 monooxygenases may be involved in protoilludene hydroxylation to elaborate melleolides with multiple alcohol groups, such as melleolide D, which carries alcohol functionalities at C-4, C-5, C-10, and C-13. The role of the NAD(+)-dependent enzymes remains unknown. Numerous melleolides, including arnamial, show 5'-O-methylation of the aromatic moiety which may be catalyzed by the methyltransferase encoded in the cluster. The flavin-dependent oxidoreductase might represent the dehydrogenase yielding the aldehyde in position 1 of arnamial and other melleolides. Finally, several halogenase localized outside of the cluster, are able to catalyze the transfer of a single chlorine atom to the melleolide backbone, resulting in a 6'-chloromelleolide product. This is Cytochrome P450 monooxygenase ARMGADRAFT_974139 from Armillaria gallica (Bulbous honey fungus).